The following is a 73-amino-acid chain: Disintegrin lutosin (73 aa).

The region spanning 1–73 is the Disintegrin domain; sequence EAGEECDCGS…ADCPRNGLYG (73 aa). Disulfide bonds link C6-C21, C8-C16, C15-C38, C29-C35, C34-C59, and C47-C66. The short motif at 51–53 is the Cell attachment site element; the sequence is RGD.

This sequence belongs to the venom metalloproteinase (M12B) family. P-II subfamily. P-IIa sub-subfamily. In terms of assembly, monomer (disintegrin). As to expression, expressed by the venom gland.

It localises to the secreted. Inhibits fibrinogen interaction with platelets. Acts by binding to alpha-IIb/beta-3 (ITGA2B/ITGB3) on the platelet surface and inhibits aggregation induced by ADP, thrombin, platelet-activating factor and collagen. This chain is Disintegrin lutosin, found in Crotalus lutosus (Great basin rattlesnake).